Here is a 106-residue protein sequence, read N- to C-terminus: uncharacterized protein (106 aa).

Positions 1–31 (MNNERLMLKGIFLGAAAGAALSLLHKPTRQA) are cleaved as a signal peptide. Residues 57–89 (VITKVDEAKKLARTLSKEVDFVNQQVKELKKTT) are a coiled coil.

This is an uncharacterized protein from Bacillus subtilis (strain 168).